The chain runs to 181 residues: MRVVLLGPPGAGKGTQAQRLAEKLGIPQISTGELFRRNIEKDTKLGHEAKKYLDAGDLVPADLTNQLVDDRLNKSDTVDGFILDGYPRSLEQAKALHEMLERRGTDIDAVLEFRVSQAVVLERLKGRGRADDTDDVVINRMNIYRDETASLLEYYSSELKTIDAIGTMDEVFARALHALGK.

10-15 (GAGKGT) provides a ligand contact to ATP. The segment at 30 to 59 (STGELFRRNIEKDTKLGHEAKKYLDAGDLV) is NMP. AMP-binding positions include Thr31, Arg36, 57 to 59 (DLV), 85 to 88 (GYPR), and Gln92. Positions 126 to 132 (GRGRADD) are LID. Residue Arg127 coordinates ATP. AMP is bound by residues Arg129 and Arg140. Gly166 is a binding site for ATP.

Belongs to the adenylate kinase family. As to quaternary structure, monomer.

Its subcellular location is the cytoplasm. It catalyses the reaction AMP + ATP = 2 ADP. The protein operates within purine metabolism; AMP biosynthesis via salvage pathway; AMP from ADP: step 1/1. In terms of biological role, catalyzes the reversible transfer of the terminal phosphate group between ATP and AMP. Plays an important role in cellular energy homeostasis and in adenine nucleotide metabolism. The chain is Adenylate kinase from Mycobacterium leprae (strain Br4923).